We begin with the raw amino-acid sequence, 430 residues long: ETS domain-containing protein Elk-4 (430 aa).

Residues 5–85 (ITLWQFLLQL…NGQKFVYKFV (81 aa)) constitute a DNA-binding region (ETS). Positions 116-127 (SKDVEYGGKERP) are enriched in basic and acidic residues. The disordered stretch occupies residues 116 to 138 (SKDVEYGGKERPPQPGAKTSSRN). Lys-166 is covalently cross-linked (Glycyl lysine isopeptide (Lys-Gly) (interchain with G-Cter in SUMO2)). 2 disordered regions span residues 245-279 (TTFN…DIDT) and 292-325 (PENL…KGLE). Residues 249–272 (PTPPVPSTPLPLKEPPRTPSPPLS) show a composition bias toward pro residues. A compositionally biased stretch (basic and acidic residues) spans 299 to 312 (PKNEDSALPEKDKT).

The protein belongs to the ETS family. As to quaternary structure, interacts with SIRT7. As to expression, lung and liver.

It is found in the nucleus. Functionally, involved in both transcriptional activation and repression. Interaction with SIRT7 leads to recruitment and stabilization of SIRT7 at promoters, followed by deacetylation of histone H3 at 'Lys-18' (H3K18Ac) and subsequent transcription repression. Forms a ternary complex with the serum response factor (SRF). Requires DNA-bound SRF for ternary complex formation and makes extensive DNA contacts to the 5'side of SRF, but does not bind DNA autonomously. This chain is ETS domain-containing protein Elk-4 (Elk4), found in Mus musculus (Mouse).